Reading from the N-terminus, the 384-residue chain is Alanine racemase (384 aa).

The Proton acceptor; specific for D-alanine role is filled by lysine 39. An N6-(pyridoxal phosphate)lysine modification is found at lysine 39. Arginine 136 is a binding site for substrate. The active-site Proton acceptor; specific for L-alanine is tyrosine 265. Substrate is bound at residue methionine 312.

Belongs to the alanine racemase family. Pyridoxal 5'-phosphate serves as cofactor.

It carries out the reaction L-alanine = D-alanine. It participates in amino-acid biosynthesis; D-alanine biosynthesis; D-alanine from L-alanine: step 1/1. Catalyzes the interconversion of L-alanine and D-alanine. May also act on other amino acids. This is Alanine racemase (alr) from Geobacillus kaustophilus (strain HTA426).